The chain runs to 156 residues: 6,7-dimethyl-8-ribityllumazine synthase (156 aa).

5-amino-6-(D-ribitylamino)uracil-binding positions include Phe22, 57–59 (AYE), and 81–83 (TVI). Residue 86–87 (GT) participates in (2S)-2-hydroxy-3-oxobutyl phosphate binding. The active-site Proton donor is His89. Phe114 lines the 5-amino-6-(D-ribitylamino)uracil pocket. Arg128 contacts (2S)-2-hydroxy-3-oxobutyl phosphate.

This sequence belongs to the DMRL synthase family. Forms an icosahedral capsid composed of 60 subunits, arranged as a dodecamer of pentamers.

It catalyses the reaction (2S)-2-hydroxy-3-oxobutyl phosphate + 5-amino-6-(D-ribitylamino)uracil = 6,7-dimethyl-8-(1-D-ribityl)lumazine + phosphate + 2 H2O + H(+). Its pathway is cofactor biosynthesis; riboflavin biosynthesis; riboflavin from 2-hydroxy-3-oxobutyl phosphate and 5-amino-6-(D-ribitylamino)uracil: step 1/2. Its function is as follows. Catalyzes the formation of 6,7-dimethyl-8-ribityllumazine by condensation of 5-amino-6-(D-ribitylamino)uracil with 3,4-dihydroxy-2-butanone 4-phosphate. This is the penultimate step in the biosynthesis of riboflavin. The polypeptide is 6,7-dimethyl-8-ribityllumazine synthase (Serratia proteamaculans (strain 568)).